A 661-amino-acid chain; its full sequence is Pentatricopeptide repeat-containing protein At5g66631 (661 aa).

PPR repeat units lie at residues Val139 to Lys173, Cys176 to Pro210, Asn211 to Arg245, Thr246 to Pro280, Asp410 to Leu444, Pro445 to Leu475, Leu484 to Pro518, Asp519 to Pro553, and Asp554 to Pro588.

It belongs to the PPR family. P subfamily.

The protein is Pentatricopeptide repeat-containing protein At5g66631 of Arabidopsis thaliana (Mouse-ear cress).